An 89-amino-acid chain; its full sequence is Small ribosomal subunit protein uS15 (89 aa).

This sequence belongs to the universal ribosomal protein uS15 family. As to quaternary structure, part of the 30S ribosomal subunit. Forms a bridge to the 50S subunit in the 70S ribosome, contacting the 23S rRNA.

One of the primary rRNA binding proteins, it binds directly to 16S rRNA where it helps nucleate assembly of the platform of the 30S subunit by binding and bridging several RNA helices of the 16S rRNA. In terms of biological role, forms an intersubunit bridge (bridge B4) with the 23S rRNA of the 50S subunit in the ribosome. The protein is Small ribosomal subunit protein uS15 of Paraburkholderia phymatum (strain DSM 17167 / CIP 108236 / LMG 21445 / STM815) (Burkholderia phymatum).